A 104-amino-acid polypeptide reads, in one-letter code: Replication restart protein PriB (104 aa).

One can recognise an SSB domain in the interval 1–101; sequence MTNRLTLSGT…LHAEQIELID (101 aa).

It belongs to the PriB family. Homodimer. Interacts with PriA and DnaT. Component of the replication restart primosome. Primosome assembly occurs via a 'hand-off' mechanism. PriA binds to replication forks, subsequently PriB then DnaT bind; DnaT then displaces ssDNA to generate the helicase loading substrate.

Involved in the restart of stalled replication forks, which reloads the replicative helicase on sites other than the origin of replication; the PriA-PriB pathway is the major replication restart pathway. During primosome assembly it facilitates complex formation between PriA and DnaT on DNA; stabilizes PriA on DNA. Stimulates the DNA unwinding activity of PriA helicase. The polypeptide is Replication restart protein PriB (Salmonella typhi).